The sequence spans 659 residues: Exocyst complex component 5 (659 aa).

Residues 1–58 (MRFEEEIGSLQMLCDQFQNKINTLEKQMNEEKKDYVQKLHRLHEKNGEAIDKMKQLDH) adopt a coiled-coil conformation.

This sequence belongs to the SEC10 family. As to quaternary structure, the exocyst complex is composed of sec-3/exoc1, sec-5/exoc2, sec-6/exoc3, sec-8/exoc4, sec-10/exoc5, sec-15/exoc6, exo-70/exoc7 and exo-84/exoc8.

Component of the exocyst complex involved in the docking of exocytic vesicles with fusion sites on the plasma membrane. This chain is Exocyst complex component 5 (sec-10), found in Caenorhabditis elegans.